A 113-amino-acid chain; its full sequence is MKLVLFKIAVALLYLLSFFLHRLHLRLRHLHRRRRRRHHRRHHRRHHHHRRRRRRRRRRRRRHHRHHHHRHRRRRHYLHLYHQYRSSYYHPPHRYLHPLLLPFPQKHRDNHLV.

A helical transmembrane segment spans residues 4-26 (VLFKIAVALLYLLSFFLHRLHLR). Positions 32-74 (RRRRRRHHRRHHRRHHHHRRRRRRRRRRRRRHHRHHHHRHRRR) are disordered.

It is found in the membrane. This is an uncharacterized protein from Saccharomyces cerevisiae (strain ATCC 204508 / S288c) (Baker's yeast).